The primary structure comprises 453 residues: GTPase Der (453 aa).

EngA-type G domains lie at 4 to 169 (PIVA…SETP) and 177 to 352 (IKVA…RQFE). Residues 10–17 (GRPNVGKS), 57–61 (DTGGL), 120–123 (NKCE), 183–190 (GRPNVGKS), 230–234 (DTAGI), and 295–298 (NKWD) each bind GTP. Residues 353–438 (QRVTTSVINE…PIRLLWRGKK (86 aa)) form the KH-like domain.

This sequence belongs to the TRAFAC class TrmE-Era-EngA-EngB-Septin-like GTPase superfamily. EngA (Der) GTPase family. Associates with the 50S ribosomal subunit.

Its function is as follows. GTPase that plays an essential role in the late steps of ribosome biogenesis. The polypeptide is GTPase Der (Acaryochloris marina (strain MBIC 11017)).